The sequence spans 357 residues: tRNA/tmRNA (uracil-C(5))-methyltransferase (357 aa).

Residues Gln180, Tyr209, Asn214, Glu230, and Asp290 each contribute to the S-adenosyl-L-methionine site. Residue Cys315 is the Nucleophile of the active site. The active-site Proton acceptor is Glu349.

The protein belongs to the class I-like SAM-binding methyltransferase superfamily. RNA M5U methyltransferase family. TrmA subfamily.

The catalysed reaction is uridine(54) in tRNA + S-adenosyl-L-methionine = 5-methyluridine(54) in tRNA + S-adenosyl-L-homocysteine + H(+). It carries out the reaction uridine(341) in tmRNA + S-adenosyl-L-methionine = 5-methyluridine(341) in tmRNA + S-adenosyl-L-homocysteine + H(+). Its function is as follows. Dual-specificity methyltransferase that catalyzes the formation of 5-methyluridine at position 54 (m5U54) in all tRNAs, and that of position 341 (m5U341) in tmRNA (transfer-mRNA). This is tRNA/tmRNA (uracil-C(5))-methyltransferase from Campylobacter jejuni (strain RM1221).